The following is a 320-amino-acid chain: o-succinylbenzoate synthase (320 aa).

The Proton donor role is filled by K133. Residues D161, E190, and D213 each contribute to the Mg(2+) site. The active-site Proton acceptor is the K235.

It belongs to the mandelate racemase/muconate lactonizing enzyme family. MenC type 1 subfamily. The cofactor is a divalent metal cation.

It catalyses the reaction (1R,6R)-6-hydroxy-2-succinyl-cyclohexa-2,4-diene-1-carboxylate = 2-succinylbenzoate + H2O. It functions in the pathway quinol/quinone metabolism; 1,4-dihydroxy-2-naphthoate biosynthesis; 1,4-dihydroxy-2-naphthoate from chorismate: step 4/7. The protein operates within quinol/quinone metabolism; menaquinone biosynthesis. Converts 2-succinyl-6-hydroxy-2,4-cyclohexadiene-1-carboxylate (SHCHC) to 2-succinylbenzoate (OSB). The polypeptide is o-succinylbenzoate synthase (Escherichia coli O45:K1 (strain S88 / ExPEC)).